The sequence spans 327 residues: Putative ABC transporter ATP-binding protein MM_0887 (327 aa).

The segment at 1–44 is disordered; sequence MSKSTPLKSSIIRADLPEQAEGRTGPETGKDPEKTGNSEGKTDT. Residues 28 to 44 show a composition bias toward basic and acidic residues; it reads TGKDPEKTGNSEGKTDT. Residues 47 to 282 enclose the ABC transporter domain; it reads IEIKDLCHRY…PALLRKAHLR (236 aa). 81 to 88 serves as a coordination point for ATP; the sequence is GANGAGKS.

This sequence belongs to the ABC transporter superfamily.

It is found in the cell membrane. Probably part of an ABC transporter complex. Responsible for energy coupling to the transport system. In Methanosarcina mazei (strain ATCC BAA-159 / DSM 3647 / Goe1 / Go1 / JCM 11833 / OCM 88) (Methanosarcina frisia), this protein is Putative ABC transporter ATP-binding protein MM_0887.